The following is a 229-amino-acid chain: DNA transfer protein gp7 (229 aa).

The tract at residues 14-36 is disordered; that stretch reads EEPLYPEKGGKGGSSSSGAKEAA.

It belongs to the podoviruses gp7 family.

Component of the phage injection machinery. Required for injection of the phage DNA into the host. The protein is DNA transfer protein gp7 (7) of Salmonella typhimurium (Bacteriophage ST64T).